Here is a 213-residue protein sequence, read N- to C-terminus: Adenylate kinase (213 aa).

10 to 15 (GAGKGT) serves as a coordination point for ATP. An NMP region spans residues 30-59 (STGDIFRANIKNNTELGQKAKTYMDKGELV). Residues threonine 31, arginine 36, 57-59 (ELV), 85-88 (GFPR), and glutamine 92 contribute to the AMP site. The interval 126-163 (GRRACVGCGATYHIQFNPTKVEGICDACGEKLILRDDD) is LID. Arginine 127 contributes to the ATP binding site. Zn(2+) is bound by residues cysteine 130 and cysteine 133. An ATP-binding site is contributed by 136 to 137 (TY). Residues cysteine 150 and cysteine 153 each coordinate Zn(2+). Positions 160 and 171 each coordinate AMP. Glutamine 199 lines the ATP pocket.

It belongs to the adenylate kinase family. Monomer.

The protein localises to the cytoplasm. The enzyme catalyses AMP + ATP = 2 ADP. Its pathway is purine metabolism; AMP biosynthesis via salvage pathway; AMP from ADP: step 1/1. Functionally, catalyzes the reversible transfer of the terminal phosphate group between ATP and AMP. Plays an important role in cellular energy homeostasis and in adenine nucleotide metabolism. The sequence is that of Adenylate kinase from Lachnospira eligens (strain ATCC 27750 / DSM 3376 / VPI C15-48 / C15-B4) (Eubacterium eligens).